The primary structure comprises 225 residues: Ribonuclease HII (225 aa).

One can recognise an RNase H type-2 domain in the interval 2–210 (GIVVGVDEAG…VRKLGGPWRS (209 aa)). Residues aspartate 8, glutamate 9, and aspartate 107 each contribute to the a divalent metal cation site.

It belongs to the RNase HII family. The cofactor is Mn(2+). Requires Mg(2+) as cofactor.

It is found in the cytoplasm. It carries out the reaction Endonucleolytic cleavage to 5'-phosphomonoester.. Endonuclease that specifically degrades the RNA of RNA-DNA hybrids. The protein is Ribonuclease HII (rnhB) of Aeropyrum pernix (strain ATCC 700893 / DSM 11879 / JCM 9820 / NBRC 100138 / K1).